The primary structure comprises 427 residues: UPF0229 protein YeaH (427 aa).

The disordered stretch occupies residues 84 to 110 (QSDRIERPQGGGGGSGSGQGQASQDGE). Positions 92–102 (QGGGGGSGSGQ) are enriched in gly residues.

This sequence belongs to the UPF0229 family.

The sequence is that of UPF0229 protein YeaH from Escherichia fergusonii (strain ATCC 35469 / DSM 13698 / CCUG 18766 / IAM 14443 / JCM 21226 / LMG 7866 / NBRC 102419 / NCTC 12128 / CDC 0568-73).